A 602-amino-acid chain; its full sequence is UvrABC system protein C (602 aa).

Residues 15–92 (DLPGSYQMKD…IQKYQPYYNI (78 aa)) enclose the GIY-YIG domain. The region spanning 197-232 (GKAKASLTAKMERAAKNLQFERAAEIRDQLHYIEQT) is the UVR domain.

Belongs to the UvrC family. Interacts with UvrB in an incision complex.

It is found in the cytoplasm. Functionally, the UvrABC repair system catalyzes the recognition and processing of DNA lesions. UvrC both incises the 5' and 3' sides of the lesion. The N-terminal half is responsible for the 3' incision and the C-terminal half is responsible for the 5' incision. This Lacticaseibacillus paracasei (strain ATCC 334 / BCRC 17002 / CCUG 31169 / CIP 107868 / KCTC 3260 / NRRL B-441) (Lactobacillus paracasei) protein is UvrABC system protein C.